A 261-amino-acid chain; its full sequence is Cytochrome c oxidase subunit 3 (261 aa).

Residues 1 to 15 (MTHQTHAYHMVNPSP) are Mitochondrial matrix-facing. A helical transmembrane segment spans residues 16-34 (WPLTGALSALLMTSGLIMW). At 35–40 (FHFNST) the chain is on the mitochondrial intermembrane side. Residues 41-66 (ALLTLGLTTNMLTMYQWWRDVIREST) form a helical membrane-spanning segment. Residues 67 to 72 (FQGHHT) are Mitochondrial matrix-facing. The chain crosses the membrane as a helical span at residues 73–105 (PAVQKGLRYGMILFIISEVLFFTGFFWAFYHSS). Topologically, residues 106 to 128 (LAPTPELGGCWPPTGIHPLNPLE) are mitochondrial intermembrane. The helical transmembrane segment at 129 to 152 (VPLLNTSVLLASGVSITWAHHSLM) threads the bilayer. Over 153-155 (EGN) the chain is Mitochondrial matrix. The chain crosses the membrane as a helical span at residues 156-183 (RYHMLQALFITIALGVYFTLLQASEYYE). The Mitochondrial intermembrane segment spans residues 184–190 (APFTISD). A helical membrane pass occupies residues 191–223 (GVYGSTFFVATGFHGLHVIIGSTFLIVCFFRQL). Over 224–232 (KFHFTSSHH) the chain is Mitochondrial matrix. Residues 233 to 256 (FGFEAAAWYWHFVDVVWLFLYMSI) form a helical membrane-spanning segment. The Mitochondrial intermembrane segment spans residues 257-261 (YWWGS).

This sequence belongs to the cytochrome c oxidase subunit 3 family. In terms of assembly, component of the cytochrome c oxidase (complex IV, CIV), a multisubunit enzyme composed of 14 subunits. The complex is composed of a catalytic core of 3 subunits MT-CO1, MT-CO2 and MT-CO3, encoded in the mitochondrial DNA, and 11 supernumerary subunits COX4I, COX5A, COX5B, COX6A, COX6B, COX6C, COX7A, COX7B, COX7C, COX8 and NDUFA4, which are encoded in the nuclear genome. The complex exists as a monomer or a dimer and forms supercomplexes (SCs) in the inner mitochondrial membrane with NADH-ubiquinone oxidoreductase (complex I, CI) and ubiquinol-cytochrome c oxidoreductase (cytochrome b-c1 complex, complex III, CIII), resulting in different assemblies (supercomplex SCI(1)III(2)IV(1) and megacomplex MCI(2)III(2)IV(2)).

Its subcellular location is the mitochondrion inner membrane. It catalyses the reaction 4 Fe(II)-[cytochrome c] + O2 + 8 H(+)(in) = 4 Fe(III)-[cytochrome c] + 2 H2O + 4 H(+)(out). In terms of biological role, component of the cytochrome c oxidase, the last enzyme in the mitochondrial electron transport chain which drives oxidative phosphorylation. The respiratory chain contains 3 multisubunit complexes succinate dehydrogenase (complex II, CII), ubiquinol-cytochrome c oxidoreductase (cytochrome b-c1 complex, complex III, CIII) and cytochrome c oxidase (complex IV, CIV), that cooperate to transfer electrons derived from NADH and succinate to molecular oxygen, creating an electrochemical gradient over the inner membrane that drives transmembrane transport and the ATP synthase. Cytochrome c oxidase is the component of the respiratory chain that catalyzes the reduction of oxygen to water. Electrons originating from reduced cytochrome c in the intermembrane space (IMS) are transferred via the dinuclear copper A center (CU(A)) of subunit 2 and heme A of subunit 1 to the active site in subunit 1, a binuclear center (BNC) formed by heme A3 and copper B (CU(B)). The BNC reduces molecular oxygen to 2 water molecules using 4 electrons from cytochrome c in the IMS and 4 protons from the mitochondrial matrix. The chain is Cytochrome c oxidase subunit 3 (MT-CO3) from Ovis aries (Sheep).